A 413-amino-acid chain; its full sequence is Arginine biosynthesis bifunctional protein ArgJ (413 aa).

Substrate is bound by residues threonine 163, lysine 189, threonine 200, glutamate 286, asparagine 408, and threonine 413. Threonine 200 serves as the catalytic Nucleophile.

Belongs to the ArgJ family. Heterotetramer of two alpha and two beta chains.

It is found in the cytoplasm. It carries out the reaction N(2)-acetyl-L-ornithine + L-glutamate = N-acetyl-L-glutamate + L-ornithine. It catalyses the reaction L-glutamate + acetyl-CoA = N-acetyl-L-glutamate + CoA + H(+). Its pathway is amino-acid biosynthesis; L-arginine biosynthesis; L-ornithine and N-acetyl-L-glutamate from L-glutamate and N(2)-acetyl-L-ornithine (cyclic): step 1/1. The protein operates within amino-acid biosynthesis; L-arginine biosynthesis; N(2)-acetyl-L-ornithine from L-glutamate: step 1/4. Its function is as follows. Catalyzes two activities which are involved in the cyclic version of arginine biosynthesis: the synthesis of N-acetylglutamate from glutamate and acetyl-CoA as the acetyl donor, and of ornithine by transacetylation between N(2)-acetylornithine and glutamate. This Staphylococcus aureus (strain Mu50 / ATCC 700699) protein is Arginine biosynthesis bifunctional protein ArgJ.